A 208-amino-acid chain; its full sequence is Small ribosomal subunit protein eS8 (208 aa).

Residues 1-27 (MGISRDNWHKRRKTGGKRKPYHKKRKY) are disordered. G2 carries N-myristoyl glycine lipidation. The span at 8–26 (WHKRRKTGGKRKPYHKKRK) shows a compositional bias: basic residues. An N6-acetyllysine mark is found at K37 and K128. T130 is subject to Phosphothreonine. Position 160 is a phosphoserine (S160). Residues K170 and K193 each participate in a glycyl lysine isopeptide (Lys-Gly) (interchain with G-Cter in SUMO2) cross-link.

The protein belongs to the eukaryotic ribosomal protein eS8 family. As to quaternary structure, component of the small ribosomal subunit. Identified in a IGF2BP1-dependent mRNP granule complex containing untranslated mRNAs. Part of the small subunit (SSU) processome, composed of more than 70 proteins and the RNA chaperone small nucleolar RNA (snoRNA) U3.

The protein localises to the cytoplasm. It localises to the membrane. The protein resides in the nucleus. It is found in the nucleolus. Component of the small ribosomal subunit. The ribosome is a large ribonucleoprotein complex responsible for the synthesis of proteins in the cell. Part of the small subunit (SSU) processome, first precursor of the small eukaryotic ribosomal subunit. During the assembly of the SSU processome in the nucleolus, many ribosome biogenesis factors, an RNA chaperone and ribosomal proteins associate with the nascent pre-rRNA and work in concert to generate RNA folding, modifications, rearrangements and cleavage as well as targeted degradation of pre-ribosomal RNA by the RNA exosome. The sequence is that of Small ribosomal subunit protein eS8 (RPS8) from Oryctolagus cuniculus (Rabbit).